Reading from the N-terminus, the 331-residue chain is tRNA U34 carboxymethyltransferase (331 aa).

Residues Lys-91, Trp-105, Lys-110, Gly-130, 152–154 (DPS), 181–182 (IE), Met-196, Tyr-200, and Arg-315 contribute to the carboxy-S-adenosyl-L-methionine site.

The protein belongs to the class I-like SAM-binding methyltransferase superfamily. CmoB family. As to quaternary structure, homotetramer.

The enzyme catalyses carboxy-S-adenosyl-L-methionine + 5-hydroxyuridine(34) in tRNA = 5-carboxymethoxyuridine(34) in tRNA + S-adenosyl-L-homocysteine + H(+). In terms of biological role, catalyzes carboxymethyl transfer from carboxy-S-adenosyl-L-methionine (Cx-SAM) to 5-hydroxyuridine (ho5U) to form 5-carboxymethoxyuridine (cmo5U) at position 34 in tRNAs. In Shewanella baltica (strain OS155 / ATCC BAA-1091), this protein is tRNA U34 carboxymethyltransferase.